The sequence spans 439 residues: Proline--tRNA ligase (439 aa).

This sequence belongs to the class-II aminoacyl-tRNA synthetase family. ProS type 2 subfamily. As to quaternary structure, homodimer.

It localises to the cytoplasm. It catalyses the reaction tRNA(Pro) + L-proline + ATP = L-prolyl-tRNA(Pro) + AMP + diphosphate. Its function is as follows. Catalyzes the attachment of proline to tRNA(Pro) in a two-step reaction: proline is first activated by ATP to form Pro-AMP and then transferred to the acceptor end of tRNA(Pro). The protein is Proline--tRNA ligase of Phenylobacterium zucineum (strain HLK1).